The primary structure comprises 481 residues: Cysteine--tRNA ligase (481 aa).

Cys-43 is a binding site for Zn(2+). The 'HIGH' region motif lies at 45–55; it reads ATVQGLPHIGH. Positions 221, 246, and 250 each coordinate Zn(2+). A 'KMSKS' region motif is present at residues 277 to 281; that stretch reads KMSKS. Lys-280 lines the ATP pocket.

It belongs to the class-I aminoacyl-tRNA synthetase family. As to quaternary structure, monomer. Zn(2+) serves as cofactor.

The protein localises to the cytoplasm. The enzyme catalyses tRNA(Cys) + L-cysteine + ATP = L-cysteinyl-tRNA(Cys) + AMP + diphosphate. This is Cysteine--tRNA ligase from Mycobacterium sp. (strain JLS).